A 208-amino-acid polypeptide reads, in one-letter code: MKVVEVKHPLVRHKIGLMREGDISTKRFRELAAEVGSLLTYEATADFETETVTIEGWNGPVEVDQIKGKKVTVVPILRAGLGMMDGVLEHIPSARISVVGIYRDEETLEPVPYFEKLASDMNERIALVVDPMLATGGSMIATVDLLKKRGCTSIKALVLVAAPEGIKALEAAHPDIELYTAAIDKCLNEKGYILPGLGDAGDKIFGTK.

5-phospho-alpha-D-ribose 1-diphosphate is bound by residues Arg-78, Arg-103, and 130–138; that span reads DPMLATGGS. Uracil-binding positions include Ile-193 and 198–200; that span reads GDA. Asp-199 is a binding site for 5-phospho-alpha-D-ribose 1-diphosphate.

This sequence belongs to the UPRTase family. Requires Mg(2+) as cofactor.

It catalyses the reaction UMP + diphosphate = 5-phospho-alpha-D-ribose 1-diphosphate + uracil. It functions in the pathway pyrimidine metabolism; UMP biosynthesis via salvage pathway; UMP from uracil: step 1/1. Allosterically activated by GTP. Catalyzes the conversion of uracil and 5-phospho-alpha-D-ribose 1-diphosphate (PRPP) to UMP and diphosphate. The chain is Uracil phosphoribosyltransferase from Shewanella baltica (strain OS223).